Reading from the N-terminus, the 283-residue chain is Pantothenate synthetase (283 aa).

33–40 (MGALHEGH) provides a ligand contact to ATP. H40 acts as the Proton donor in catalysis. Q64 is a (R)-pantoate binding site. Q64 serves as a coordination point for beta-alanine. 150-153 (GEKD) lines the ATP pocket. Q156 contributes to the (R)-pantoate binding site. ATP is bound by residues I179 and 187 to 190 (MSSR).

Belongs to the pantothenate synthetase family. Homodimer.

Its subcellular location is the cytoplasm. It catalyses the reaction (R)-pantoate + beta-alanine + ATP = (R)-pantothenate + AMP + diphosphate + H(+). It functions in the pathway cofactor biosynthesis; (R)-pantothenate biosynthesis; (R)-pantothenate from (R)-pantoate and beta-alanine: step 1/1. In terms of biological role, catalyzes the condensation of pantoate with beta-alanine in an ATP-dependent reaction via a pantoyl-adenylate intermediate. The sequence is that of Pantothenate synthetase from Mesorhizobium japonicum (strain LMG 29417 / CECT 9101 / MAFF 303099) (Mesorhizobium loti (strain MAFF 303099)).